The sequence spans 505 residues: MHEIITLQLGQRANYLATHFWNLQESYFTYGEAEETIIDHDVHFRPGIGADGSETYTPRTLIYDLKGAFGSLRKYNALYELSTDADPGQGLWDGKEVIQRQTPIIPSEYQKYLEQGLPAPALSSDTVRYWSDYNRLFYHPRSIVQLNDYELNSKIMPFEDWSVGDDLFGELDKEHDLLDRDLRPFAEECDQLRALQLFTSSDDAWGGFAAKYVDRLRDEFGKKAVWVWAIEGGKKVQKHNQLKRDMNKARSIHSISPQSSLYVPILDPPTRLPISISLDAQSEWQTSALISTAMETVTLPTRLRSYTDFETSLAGEDGTHKIFELQSEILPEDMSNHTQPVQNPEDRRTQASKGGSSKVKREFDLDFSYDDPNNGDSHIFNQVQVGRGYSPEKEVPKSREDLGLKRKERFYNSEPMLESFYIPLAFPILDSSPRNMFSVKHKEAKINVLAALTASSRTATKLKAMEAMAGRVIGVDERENLVNGLGEIRESYETGWMSDSDFDDD.

The disordered stretch occupies residues 330–358; the sequence is LPEDMSNHTQPVQNPEDRRTQASKGGSSK.

The protein belongs to the misato family.

It is found in the mitochondrion. Functionally, involved in the partitioning of the mitochondrial organelle and mitochondrial DNA (mtDNA) inheritance. The sequence is that of Protein dml1 (dml1) from Aspergillus fumigatus (strain ATCC MYA-4609 / CBS 101355 / FGSC A1100 / Af293) (Neosartorya fumigata).